The chain runs to 310 residues: 4-hydroxyproline 2-epimerase (310 aa).

Cysteine 88 serves as the catalytic Proton acceptor. Substrate contacts are provided by residues 89–90 (GH), histidine 208, and aspartate 232. The active-site Proton donor is cysteine 236. Residue 237-238 (GT) participates in substrate binding.

It belongs to the proline racemase family.

The catalysed reaction is trans-4-hydroxy-L-proline = cis-4-hydroxy-D-proline. Catalyzes the epimerization of trans-4-hydroxy-L-proline (t4LHyp) to cis-4-hydroxy-D-proline (c4DHyp). Is likely involved in a degradation pathway that converts t4LHyp to alpha-ketoglutarate. Displays no proline racemase activity. The protein is 4-hydroxyproline 2-epimerase of Acinetobacter baumannii (strain AYE).